The following is a 392-amino-acid chain: MSRAALLSLTLTDFRSYERATLRPDGASVYLFGANGAGKTNLLEAISLLSPGKGLRGSSLIEVGRRLPGEATGRAWAVAAETEAPQTDFGQDEPVRLGTGVELAGAARRIVRIDGETVPPGRLADHVRPIWLTPAQDRLFLEAASERRRFFDRLVFAGEPAHAGHANAYDKAQRERMRLLTDAAESGQPADAVWLTALEARLGAAGALMANARARTLMALQAEIDSRGDRPFPRARLALTGEWEKLALVGVEIAEIEARLAAALAAARPRDGAAGRALTGPHRGDLAIHHVDKDRPAAECSTGEQKALILNLVLAQAARLSRAKDAPNPILLLDEVAAHLDLKRRAALADEITALGLQAFLTGTDQSLFDHLKGRALGVRVSELGLTALEDV.

An ATP-binding site is contributed by 33-40 (GANGAGKT).

It belongs to the RecF family.

The protein resides in the cytoplasm. Its function is as follows. The RecF protein is involved in DNA metabolism; it is required for DNA replication and normal SOS inducibility. RecF binds preferentially to single-stranded, linear DNA. It also seems to bind ATP. The chain is DNA replication and repair protein RecF from Caulobacter sp. (strain K31).